The sequence spans 174 residues: Shikimate kinase 2 (174 aa).

An ATP-binding site is contributed by 12–17; that stretch reads GAGKTT. Mg(2+) is bound by residues Thr16 and Asp32. Positions 34, 58, and 79 each coordinate substrate. The LID domain stretch occupies residues 112 to 126; sequence AEDPEEAQRPSLTGK. Residue Arg120 participates in ATP binding. Arg139 is a binding site for substrate. Gln155 serves as a coordination point for ATP.

Belongs to the shikimate kinase family. AroL subfamily. In terms of assembly, monomer. The cofactor is Mg(2+).

Its subcellular location is the cytoplasm. It catalyses the reaction shikimate + ATP = 3-phosphoshikimate + ADP + H(+). It participates in metabolic intermediate biosynthesis; chorismate biosynthesis; chorismate from D-erythrose 4-phosphate and phosphoenolpyruvate: step 5/7. In terms of biological role, catalyzes the specific phosphorylation of the 3-hydroxyl group of shikimic acid using ATP as a cosubstrate. In Yersinia pestis bv. Antiqua (strain Antiqua), this protein is Shikimate kinase 2.